We begin with the raw amino-acid sequence, 406 residues long: Tyrosine-specific transport system 2 (406 aa).

The next 11 helical transmembrane spans lie at 7 to 27 (FGSA…AMPL), 38 to 58 (LLLL…FVEV), 83 to 103 (IFAT…YITG), 119 to 139 (AMSL…FVVV), 150 to 170 (VLFI…LPKV), 183 to 203 (AFVV…VIMA), 219 to 239 (AILI…LATH), 279 to 299 (VFSS…VFEG), 314 to 334 (FVLT…YPEG), 335 to 355 (FITA…ILPI), and 376 to 396 (NFAL…PFLI).

This sequence belongs to the amino acid/polyamine transporter 2 family. Mtr/TnaB/TyrP permease subfamily.

The protein resides in the cell inner membrane. The catalysed reaction is L-tyrosine(in) + H(+)(in) = L-tyrosine(out) + H(+)(out). Transports tyrosine across the cytoplasmic membrane. The transport system is energized by the proton motive force. The protein is Tyrosine-specific transport system 2 (tyrP-B) of Haemophilus influenzae (strain ATCC 51907 / DSM 11121 / KW20 / Rd).